Reading from the N-terminus, the 291-residue chain is Phycobilisome 32.1 kDa linker polypeptide, phycocyanin-associated, rod 1 (291 aa).

A PBS-linker domain is found at 2–179 (AITTAASRLG…LYRGYANSDR (178 aa)). In terms of domain architecture, CpcD-like spans 236 to 288 (SKLFRVEITAISAPGYPKVRRSNKAVIVPFEQLNQTLQQINRLGGKVASITPA).

The protein belongs to the phycobilisome linker protein family. In terms of assembly, part of 2 PBS rod complexes, the conventional CpcG-PBS rod and a photosystem I-specific CpcL-PBS rod, both of which include ferredoxin--NADP reductase (petH). CpcG-PBS has on average 3 stacked phycocyanin hexamers (PC, CpcA and CpcB). Linker CpcG connects the PC stack to the thylakoid, the hexamers are linked by 1 copy of CpcC1, 1 copy of CpcC2 and the stack is terminated by a single copy of CpcD. The CpcL-PBS has on average 5 stacked phycocyanin hexamers (PC, CpcA and CpcB). Linker CpcL connects the PC stack to the thylakoid, the hexamers are linked by 1 copy of CpcC1, 3 copies of CpcC2 and the stack is terminated by a single copy of CpcD.

Its subcellular location is the cellular thylakoid membrane. In terms of biological role, rod linker protein, connecting hexameric phycocyanin (PC, made by cpcA and cpcB) rods in the phycobilisome (PBS). PC is the major phycobiliprotein in PBS rods. Linker polypeptides determine the state of aggregation and the location of the disk-shaped phycobiliprotein units within the phycobilisome and modulate their spectroscopic properties in order to mediate a directed and optimal energy transfer. This chain is Phycobilisome 32.1 kDa linker polypeptide, phycocyanin-associated, rod 1 (cpcC1), found in Synechocystis sp. (strain ATCC 27184 / PCC 6803 / Kazusa).